A 182-amino-acid chain; its full sequence is Ribosome maturation factor RimP (182 aa).

Belongs to the RimP family.

The protein localises to the cytoplasm. Functionally, required for maturation of 30S ribosomal subunits. The protein is Ribosome maturation factor RimP of Chloroherpeton thalassium (strain ATCC 35110 / GB-78).